A 371-amino-acid chain; its full sequence is Signal peptide peptidase-like 1 (371 aa).

The Lumenal portion of the chain corresponds to 1–6 (MESLWK). The chain crosses the membrane as a helical span at residues 7 to 27 (LSYLLEPASLALILTAVSVAY). Topologically, residues 28–57 (ASASRALDHGREMERNLDFSEASITLDRSQ) are cytoplasmic. Residues 58-75 (ALMIPLASSCSLLLMFYL) form a helical membrane-spanning segment. At 76 to 80 (FSSVS) the chain is on the lumenal side. The chain crosses the membrane as a helical span at residues 81-103 (HLVTAFTAVASAMALFFCLSPYV). At 104 to 123 (NCVRSRLGVGDPFVSRCCSK) the chain is on the cytoplasmic side. Residues 124–146 (PFTRLQGLLVAICVGTVVAWLVS) traverse the membrane as a helical segment. Topologically, residues 147–149 (GHW) are lumenal. A helical transmembrane segment spans residues 150–167 (LLNNLLGISICIAFVSHV). The Cytoplasmic segment spans residues 168–171 (RLPN). The helical transmembrane segment at 172–192 (IKICALLLVCLFVYDVFWVFF) threads the bilayer. The active site involves aspartate 186. Topologically, residues 193–258 (SERFFGANVM…LAPGSSPGDY (66 aa)) are lumenal. Residues 259 to 279 (MMLGLGDMAIPGMLLALVLSF) traverse the membrane as a helical segment. Aspartate 265 is an active-site residue. Residues 280-301 (DHRKIKDMSVSQDMPPSKQRKY) lie on the Cytoplasmic side of the membrane. Residues 302 to 322 (VWYALTGYGVGLVTALAAGIL) form a helical membrane-spanning segment. Residues 323–326 (SQSP) lie on the Lumenal side of the membrane. The helical transmembrane segment at 327–347 (QPALLYLVPSTLGPVMYMSWL) threads the bilayer. Positions 328-330 (PAL) match the PAL motif. Topologically, residues 348 to 371 (RNELWELWEGSRPIINDKAHLLEV) are cytoplasmic.

Belongs to the peptidase A22B family.

Its subcellular location is the endosome membrane. Intramembrane-cleaving aspartic protease (I-CLiP) that cleaves type II membrane signal peptides in the hydrophobic plane of the membrane. In Oryza sativa subsp. japonica (Rice), this protein is Signal peptide peptidase-like 1 (SPPL1).